The primary structure comprises 510 residues: Protein phosphatase EYA3 (510 aa).

Disordered regions lie at residues 1–32 and 175–233; these read MQEPREQTLSQVNNPDASDEKPETSSLASNLS and YQTE…DASS. Positions 7–16 are enriched in polar residues; that stretch reads QTLSQVNNPD. Residues 192–203 are compositionally biased toward low complexity; the sequence is LPSDSSASPPLS. Phosphoserine is present on residues Ser-199 and Ser-203. Catalysis depends on Asp-246, which acts as the Nucleophile. 2 residues coordinate Mg(2+): Asp-246 and Asp-248. Catalysis depends on Asp-248, which acts as the Proton donor. Residues Ser-375 and Ser-409 each carry the phosphoserine modification. Position 474 (Asp-474) interacts with Mg(2+).

This sequence belongs to the HAD-like hydrolase superfamily. EYA family. As to quaternary structure, interacts with SIX1 and DACH1, and probably SIX2, SIX4 and SIX5. It depends on Mg(2+) as a cofactor. Ser-203 phosphorylation is required for localization at sites of DNA damage and directing interaction with H2AX. In terms of tissue distribution, expressed in branchial arches, CNS and developing eye.

The protein resides in the cytoplasm. It is found in the nucleus. The catalysed reaction is O-phospho-L-tyrosyl-[protein] + H2O = L-tyrosyl-[protein] + phosphate. In terms of biological role, tyrosine phosphatase that specifically dephosphorylates 'Tyr-142' of histone H2AX (H2AXY142ph). 'Tyr-142' phosphorylation of histone H2AX plays a central role in DNA repair and acts as a mark that distinguishes between apoptotic and repair responses to genotoxic stress. Promotes efficient DNA repair by dephosphorylating H2AX, promoting the recruitment of DNA repair complexes containing MDC1. Its function as histone phosphatase probably explains its role in transcription regulation during organogenesis. The phosphatase activity has been shown in vitro. Coactivates SIX1. Seems to coactivate SIX2, SIX4 and SIX5. The repression of precursor cell proliferation in myoblasts by SIX1 is switched to activation through recruitment of EYA3 to the SIX1-DACH1 complex and seems to be dependent on EYA3 phosphatase activity. May be involved in development of the eye. May play a role in mediating the induction and differentiation of cranial placodes. The protein is Protein phosphatase EYA3 (Eya3) of Mus musculus (Mouse).